A 519-amino-acid chain; its full sequence is Probable carboxypeptidase S-like 2 (519 aa).

Residues 25 to 45 (FNLIKIIIRNLLIGILLMLVL) form a helical membrane-spanning segment. A Zn(2+)-binding site is contributed by H151. The active site involves D153. Residue D184 participates in Zn(2+) binding. Residue E218 is the Proton acceptor of the active site. Zn(2+) contacts are provided by E219, D246, and H490.

Belongs to the peptidase M20A family. Zn(2+) serves as cofactor.

The protein resides in the membrane. This chain is Probable carboxypeptidase S-like 2, found in Dictyostelium discoideum (Social amoeba).